Reading from the N-terminus, the 397-residue chain is Succinate--CoA ligase [ADP-forming] subunit beta (397 aa).

The ATP-grasp domain maps to 9–244 (KEIMKQYGIS…LTEEDPREVQ (236 aa)). Residues Lys-46, 53-55 (GRG), Glu-99, Leu-102, and Glu-107 contribute to the ATP site. 2 residues coordinate Mg(2+): Asn-199 and Asp-213. Substrate contacts are provided by residues Asn-264 and 321–323 (GIM).

The protein belongs to the succinate/malate CoA ligase beta subunit family. As to quaternary structure, heterotetramer of two alpha and two beta subunits. Mg(2+) serves as cofactor.

The catalysed reaction is succinate + ATP + CoA = succinyl-CoA + ADP + phosphate. It catalyses the reaction GTP + succinate + CoA = succinyl-CoA + GDP + phosphate. It participates in carbohydrate metabolism; tricarboxylic acid cycle; succinate from succinyl-CoA (ligase route): step 1/1. Its function is as follows. Succinyl-CoA synthetase functions in the citric acid cycle (TCA), coupling the hydrolysis of succinyl-CoA to the synthesis of either ATP or GTP and thus represents the only step of substrate-level phosphorylation in the TCA. The beta subunit provides nucleotide specificity of the enzyme and binds the substrate succinate, while the binding sites for coenzyme A and phosphate are found in the alpha subunit. The sequence is that of Succinate--CoA ligase [ADP-forming] subunit beta from Alkaliphilus metalliredigens (strain QYMF).